The primary structure comprises 245 residues: Venom nerve growth factor 1 (245 aa).

Residues 1–18 form the signal peptide; it reads MSMLCYTLIIAFLIGIWA. Positions 19–125 are excised as a propeptide; the sequence is APKSEDNVPL…ALNRNIRAKR (107 aa). The segment covering 47 to 66 has biased composition (basic and acidic residues); it reads GLKTSRNTDQRHPAPKKAED. The interval 47-69 is disordered; sequence GLKTSRNTDQRHPAPKKAEDQEL. Cystine bridges form between Cys139-Cys206, Cys182-Cys234, and Cys194-Cys236. Residues Asn148 and Asn151 are each glycosylated (N-linked (GlcNAc...) asparagine).

Belongs to the NGF-beta family. In terms of assembly, homodimer; non-covalently linked. As to expression, expressed by the venom gland.

The protein localises to the secreted. In terms of biological role, nerve growth factor is important for the development and maintenance of the sympathetic and sensory nervous systems. It stimulates division and differentiation of sympathetic and embryonic sensory neurons as well as basal forebrain cholinergic neurons in the brain. Its relevance in the snake venom is not clear. However, it has been shown to inhibit metalloproteinase-dependent proteolysis of platelet glycoprotein Ib alpha, suggesting a metalloproteinase inhibition to prevent metalloprotease autodigestion and/or protection against prey proteases. Binds a lipid between the two protein chains in the homodimer. The lipid-bound form promotes histamine relase from mouse mast cells, contrary to the lipid-free form. The sequence is that of Venom nerve growth factor 1 from Tropidechis carinatus (Australian rough-scaled snake).